Here is a 517-residue protein sequence, read N- to C-terminus: 3-hydroxyphenylacetate 6-hydroxylase (517 aa).

Cysteine 449 provides a ligand contact to heme.

Belongs to the cytochrome P450 family.

It carries out the reaction 3-hydroxyphenylacetate + NADH + O2 + H(+) = homogentisate + NAD(+) + H2O. The enzyme catalyses 3-hydroxyphenylacetate + NADPH + O2 + H(+) = homogentisate + NADP(+) + H2O. It catalyses the reaction 3,4-dihydroxyphenylacetate + NADH + O2 + H(+) = 2,4,5-trihydroxyphenylacetate + NAD(+) + H2O. The catalysed reaction is 3,4-dihydroxyphenylacetate + NADPH + O2 + H(+) = 2,4,5-trihydroxyphenylacetate + NADP(+) + H2O. Its pathway is aromatic compound metabolism; phenylacetate degradation. Functionally, catalyzes the hydroxylation of 3-hydroxyphenylacetate and 3,4-dihydroxyphenylacetate to 2,5-dihydroxyphenylacetate (homogentisate) and 2,4,5-trihydroxyphenylacetate, respectively. Both of these compounds are used as substrate by homogentisate dioxygenase in the homogentisate pathway. The homogentisate pathway is used to catabolize phenylacetate and use it as a carbon source. Can also catalyze the hydroxylation of phenylacetate to 2-hydroxyphenylacetate at low efficiency to compensate for loss of phacA. The chain is 3-hydroxyphenylacetate 6-hydroxylase (phacB) from Emericella nidulans (Aspergillus nidulans).